A 407-amino-acid chain; its full sequence is Large ribosomal subunit protein uL3-like (407 aa).

Residues methionine 1–threonine 31 show a composition bias toward basic residues. Disordered regions lie at residues methionine 1–aspartate 35 and glutamine 383–leucine 407. Over residues lysine 394–leucine 407 the composition is skewed to basic and acidic residues.

The protein belongs to the universal ribosomal protein uL3 family. As to quaternary structure, component of the large ribosomal subunit in striated muscle cells.

In terms of biological role, heart- and skeletal muscle-specific component of the ribosome, which regulates muscle function. Component of the large ribosomal subunit in striated muscle cells: replaces the RPL3 paralog in the ribosome in these cells. The ribosome is a large ribonucleoprotein complex responsible for the synthesis of proteins in the cell. Inhibits myotube growth and muscle function. The protein is Large ribosomal subunit protein uL3-like (RPL3L) of Bos taurus (Bovine).